Reading from the N-terminus, the 224-residue chain is Putative O-methyltransferase MMAR_4217 (224 aa).

Residues 1-11 (MHGTDSSSDTP) show a composition bias toward polar residues. Residues 1–20 (MHGTDSSSDTPGQPAPSRAE) are disordered. S-adenosyl-L-methionine is bound by residues Val51, Glu73, 75–76 (GT), Ser81, Asp99, and Ile100. Asp147 contributes to the substrate binding site. Residue Asp149 participates in S-adenosyl-L-methionine binding.

This sequence belongs to the class I-like SAM-binding methyltransferase superfamily. Cation-dependent O-methyltransferase family.

The chain is Putative O-methyltransferase MMAR_4217 from Mycobacterium marinum (strain ATCC BAA-535 / M).